A 191-amino-acid chain; its full sequence is MSPISILLIGFAMSTDAFAAAIGKGAAMRKPVFRDALRAGIIFGVIEAITPIIGWLLGRAALQYVEAFDHWIAFGLLGALGIHMIYNGLRPDSAEEDEDPSQHHGFWKLALTGFATSIDAMAVGIGLAFMDVHIGVMAVVIGLCTLTMVTVGIMLGRVLGSMVGKRAEIIGGVILVIIGATILYEHLHGVA.

6 helical membrane passes run 3–23, 37–57, 65–85, 107–129, 144–164, and 169–189; these read PISILLIGFAMSTDAFAAAIG, LRAGIIFGVIEAITPIIGWLL, VEAFDHWIAFGLLGALGIHMI, WKLALTGFATSIDAMAVGIGLAF, CTLTMVTVGIMLGRVLGSMVG, and IIGGVILVIIGATILYEHLHG.

The protein belongs to the MntP (TC 9.B.29) family.

The protein resides in the cell inner membrane. Functionally, probably functions as a manganese efflux pump. In Stenotrophomonas maltophilia (strain R551-3), this protein is Putative manganese efflux pump MntP.